The primary structure comprises 376 residues: MESYDIIANQPVVIDNGSGVIKAGFAGDQIPKYCFPNYVGRPKHMRVMAGALEGDLFIGPKAEEHRGLLAIRYPMEHGVVRDWNDMERIWQYVYSKDQLQTFSEEHPVLLTEAPLNPSKNREKAAEVFFETFNVPALFISMQAVLSLYATGRTTGVVLDSGDGVTHAVPVYEGFAMPHSIMRVDIAGRDVSRYLRLLLRKEGADFHTSAEFEVVRTIKERACYLSINPQKDEALETEKVQYTLPDGSTLNVGPARFRAPELLFQPDLIGDESEGLHEVLVFAIHKSDMDLRRTLFANIMLSGGSTLFKGFGDRLLSEVKKLAPKDVKIKISAPQERLYSTWIGGSILASLDTFKKMWVSKKEYEEDGSRAIHRKTF.

Met1 carries the post-translational modification N-acetylmethionine. Residue Tyr4 is modified to 3'-nitrotyrosine.

It belongs to the actin family. ARP1 subfamily.

The protein localises to the cytoplasm. It localises to the cytoskeleton. It is found in the microtubule organizing center. The protein resides in the centrosome. Functionally, component of a multi-subunit complex involved in microtubule based vesicle motility. It is associated with the centrosome. In Bos taurus (Bovine), this protein is Beta-centractin (ACTR1B).